The following is a 799-amino-acid chain: Histidine biosynthesis trifunctional protein (799 aa).

Positions 1-229 (MVLPILPLID…FIVEQENVGF (229 aa)) are phosphoribosyl-AMP cyclohydrolase. The phosphoribosyl-ATP pyrophosphohydrolase stretch occupies residues 230–312 (CHLETMSCFG…FYFALAKLVT (83 aa)). The segment at 313–799 (NNVSLKDVEN…KLGLIPKDFQ (487 aa)) is histidinol dehydrogenase. Residues glutamine 618 and histidine 621 each coordinate Zn(2+). Active-site residues include glutamate 687 and histidine 688. Aspartate 721 and histidine 780 together coordinate Zn(2+).

This sequence in the C-terminal section; belongs to the histidinol dehydrogenase family. Zn(2+) serves as cofactor.

The catalysed reaction is 1-(5-phospho-beta-D-ribosyl)-5'-AMP + H2O = 1-(5-phospho-beta-D-ribosyl)-5-[(5-phospho-beta-D-ribosylamino)methylideneamino]imidazole-4-carboxamide. The enzyme catalyses 1-(5-phospho-beta-D-ribosyl)-ATP + H2O = 1-(5-phospho-beta-D-ribosyl)-5'-AMP + diphosphate + H(+). It catalyses the reaction L-histidinol + 2 NAD(+) + H2O = L-histidine + 2 NADH + 3 H(+). Its pathway is amino-acid biosynthesis; L-histidine biosynthesis; L-histidine from 5-phospho-alpha-D-ribose 1-diphosphate: step 2/9. The protein operates within amino-acid biosynthesis; L-histidine biosynthesis; L-histidine from 5-phospho-alpha-D-ribose 1-diphosphate: step 3/9. It functions in the pathway amino-acid biosynthesis; L-histidine biosynthesis; L-histidine from 5-phospho-alpha-D-ribose 1-diphosphate: step 9/9. This is Histidine biosynthesis trifunctional protein (HIS4) from Saccharomyces bayanus (Yeast).